Here is a 286-residue protein sequence, read N- to C-terminus: Pantothenate synthetase (286 aa).

Position 30–37 (Met-30–His-37) interacts with ATP. His-37 serves as the catalytic Proton donor. Residue Gln-61 coordinates (R)-pantoate. Gln-61 provides a ligand contact to beta-alanine. Gly-149 to Asp-152 is an ATP binding site. Gln-155 lines the (R)-pantoate pocket. Residues Val-178 and Leu-186 to Arg-189 contribute to the ATP site.

Belongs to the pantothenate synthetase family. In terms of assembly, homodimer.

Its subcellular location is the cytoplasm. It carries out the reaction (R)-pantoate + beta-alanine + ATP = (R)-pantothenate + AMP + diphosphate + H(+). The protein operates within cofactor biosynthesis; (R)-pantothenate biosynthesis; (R)-pantothenate from (R)-pantoate and beta-alanine: step 1/1. Functionally, catalyzes the condensation of pantoate with beta-alanine in an ATP-dependent reaction via a pantoyl-adenylate intermediate. In Pseudomonas fluorescens (strain ATCC BAA-477 / NRRL B-23932 / Pf-5), this protein is Pantothenate synthetase.